Reading from the N-terminus, the 673-residue chain is UvrABC system protein B (673 aa).

Residues 26-414 (ANFEAGLAKQ…AGEITELVVR (389 aa)) enclose the Helicase ATP-binding domain. Residue 39 to 46 (GVTGSGKT) coordinates ATP. A Beta-hairpin motif is present at residues 92-115 (YYDYYQPEAYVPSSDTFIEKDSSI). The Helicase C-terminal domain occupies 431-597 (QVDDLMSEVH…SVARPISDIM (167 aa)). A disordered region spans residues 601 to 626 (REDAAEKKAGKGRSKSRQVAEEPADY). In terms of domain architecture, UVR spans 635-670 (AGKLKALEQKMYQHAKDLEFEAAAQIRDQILKLKAA).

It belongs to the UvrB family. Forms a heterotetramer with UvrA during the search for lesions. Interacts with UvrC in an incision complex.

The protein localises to the cytoplasm. The UvrABC repair system catalyzes the recognition and processing of DNA lesions. A damage recognition complex composed of 2 UvrA and 2 UvrB subunits scans DNA for abnormalities. Upon binding of the UvrA(2)B(2) complex to a putative damaged site, the DNA wraps around one UvrB monomer. DNA wrap is dependent on ATP binding by UvrB and probably causes local melting of the DNA helix, facilitating insertion of UvrB beta-hairpin between the DNA strands. Then UvrB probes one DNA strand for the presence of a lesion. If a lesion is found the UvrA subunits dissociate and the UvrB-DNA preincision complex is formed. This complex is subsequently bound by UvrC and the second UvrB is released. If no lesion is found, the DNA wraps around the other UvrB subunit that will check the other stand for damage. This is UvrABC system protein B from Xanthomonas campestris pv. campestris (strain 8004).